The chain runs to 155 residues: Cyanate hydratase (155 aa).

Active-site residues include Arg95, Glu98, and Ser121.

Belongs to the cyanase family.

The catalysed reaction is cyanate + hydrogencarbonate + 3 H(+) = NH4(+) + 2 CO2. Its function is as follows. Catalyzes the reaction of cyanate with bicarbonate to produce ammonia and carbon dioxide. The polypeptide is Cyanate hydratase (Pseudomonas savastanoi pv. phaseolicola (strain 1448A / Race 6) (Pseudomonas syringae pv. phaseolicola (strain 1448A / Race 6))).